Reading from the N-terminus, the 203-residue chain is Ribosomal RNA small subunit methyltransferase G (203 aa).

Residues G73, L78, 124-125 (VE), and R138 contribute to the S-adenosyl-L-methionine site.

This sequence belongs to the methyltransferase superfamily. RNA methyltransferase RsmG family.

It is found in the cytoplasm. The enzyme catalyses guanosine(527) in 16S rRNA + S-adenosyl-L-methionine = N(7)-methylguanosine(527) in 16S rRNA + S-adenosyl-L-homocysteine. Its function is as follows. Specifically methylates the N7 position of guanine in position 527 of 16S rRNA. The sequence is that of Ribosomal RNA small subunit methyltransferase G from Glaesserella parasuis serovar 5 (strain SH0165) (Haemophilus parasuis).